An 81-amino-acid chain; its full sequence is Large ribosomal subunit protein bL31B (81 aa).

It belongs to the bacterial ribosomal protein bL31 family. Type B subfamily. Part of the 50S ribosomal subunit.

This chain is Large ribosomal subunit protein bL31B, found in Lactobacillus helveticus (strain DPC 4571).